The chain runs to 392 residues: MAVVAAAAGWLLRLRAAGAEGHWRRLPGAGLARGFLHPAATVEDAAQRRQVAHFTFQPDPEPREYGQTQKMNLFQSVTSALDNSLAKDPTAVIFGEDVAFGGVFRCTVGLRDKYGKDRVFNTPLCEQGIVGFGIGIAVTGATAIAEIQFADYIFPAFDQIVNEAAKYRYRSGDLFNCGSLTIRSPWGCVGHGALYHSQSPEAFFAHCPGIKVVIPRSPFQAKGLLLSCIEDKNPCIFFEPKILYRAAAEEVPIEPYNIPLSQAEVIQEGSDVTLVAWGTQVHVIREVASMAKEKLGVSCEVIDLRTIIPWDVDTICKSVIKTGRLLISHEAPLTGGFASEISSTVQEECFLNLEAPISRVCGYDTPFPHIFEPFYIPDKWKCYDALRKMINY.

A mitochondrion-targeting transit peptide spans 1 to 50 (MAVVAAAAGWLLRLRAAGAEGHWRRLPGAGLARGFLHPAATVEDAAQRRQ). Position 152 (Tyr-152) interacts with thiamine diphosphate. The K(+) site is built by Gly-178, Leu-180, Thr-181, Cys-228, and Asp-231. Lys-232 is modified (N6-acetyllysine). Asn-233 is a K(+) binding site. N6-acetyllysine is present on Lys-241.

In terms of assembly, heterotetramer of 2 alpha/BCKDHA and 2 beta chains/BCKDHB that forms the branched-chain alpha-keto acid decarboxylase (E1) component of the BCKD complex. The branched-chain alpha-ketoacid dehydrogenase is a large complex composed of three major building blocks E1, E2 and E3. It is organized around E2, a 24-meric cubic core composed of DBT, to which are associated 6 to 12 copies of E1, and approximately 6 copies of the dehydrogenase E3, a DLD dimer. The cofactor is thiamine diphosphate.

The protein localises to the mitochondrion matrix. The catalysed reaction is N(6)-[(R)-lipoyl]-L-lysyl-[protein] + 3-methyl-2-oxobutanoate + H(+) = N(6)-[(R)-S(8)-2-methylpropanoyldihydrolipoyl]-L-lysyl-[protein] + CO2. Its function is as follows. Together with BCKDHA forms the heterotetrameric E1 subunit of the mitochondrial branched-chain alpha-ketoacid dehydrogenase (BCKD) complex. The BCKD complex catalyzes the multi-step oxidative decarboxylation of alpha-ketoacids derived from the branched-chain amino-acids valine, leucine and isoleucine producing CO2 and acyl-CoA which is subsequently utilized to produce energy. The E1 subunit catalyzes the first step with the decarboxylation of the alpha-ketoacid forming an enzyme-product intermediate. A reductive acylation mediated by the lipoylamide cofactor of E2 extracts the acyl group from the E1 active site for the next step of the reaction. The chain is 2-oxoisovalerate dehydrogenase subunit beta, mitochondrial from Homo sapiens (Human).